Reading from the N-terminus, the 58-residue chain is Temporin-1Th (58 aa).

A signal peptide spans 1 to 22 (MFTLKKSLLLLFFLGTINLSLC). Positions 23 to 46 (EEERNAEEERRDEPDERDVQVEKR) are excised as a propeptide. A disordered region spans residues 25-46 (ERNAEEERRDEPDERDVQVEKR). L56 carries the leucine amide modification.

In terms of tissue distribution, expressed by the skin glands.

Its subcellular location is the secreted. Its function is as follows. Antimicrobial peptide that renders both the outer and inner membrane of bacteria permeable to hydrophobic substances of low molecular mass. The polypeptide is Temporin-1Th (Rana temporaria (European common frog)).